Here is a 177-residue protein sequence, read N- to C-terminus: Alkyl hydroperoxide reductase AhpD (177 aa).

Cys-131 acts as the Proton donor in catalysis. A disulfide bridge connects residues Cys-131 and Cys-134. The active-site Cysteine sulfenic acid (-SOH) intermediate is the Cys-134.

It belongs to the AhpD family. As to quaternary structure, homotrimer.

The catalysed reaction is N(6)-[(R)-dihydrolipoyl]-L-lysyl-[lipoyl-carrier protein] + a hydroperoxide = N(6)-[(R)-lipoyl]-L-lysyl-[lipoyl-carrier protein] + an alcohol + H2O. Functionally, antioxidant protein with alkyl hydroperoxidase activity. Required for the reduction of the AhpC active site cysteine residues and for the regeneration of the AhpC enzyme activity. The protein is Alkyl hydroperoxide reductase AhpD of Streptomyces griseus subsp. griseus (strain JCM 4626 / CBS 651.72 / NBRC 13350 / KCC S-0626 / ISP 5235).